The primary structure comprises 147 residues: Transthyretin (147 aa).

The N-terminal stretch at 1 to 20 (MASFRLFLLCLAGLVFVSEA) is a signal peptide. The residue at position 30 (Cys30) is a Sulfocysteine. Lys35 is an L-thyroxine binding site. Glu62 bears the 4-carboxyglutamate mark. Position 72 is a phosphoserine (Ser72). Glu74 is an L-thyroxine binding site. The N-linked (GlcNAc...) asparagine glycan is linked to Asn118. An L-thyroxine-binding site is contributed by Ser137.

The protein belongs to the transthyretin family. In terms of assembly, homotetramer. Dimer of dimers. In the homotetramer, subunits assemble around a central channel that can accommodate two ligand molecules. Interacts with RBP4. Post-translationally, sulfonation of the reactive cysteine Cys-30 enhances the stability of the native conformation of TTR, avoiding misassembly of the protein leading to amyloid formation. In terms of tissue distribution, detected in serum (at protein level).

It is found in the secreted. Its function is as follows. Thyroid hormone-binding protein. Probably transports thyroxine from the bloodstream to the brain. In Bos taurus (Bovine), this protein is Transthyretin (TTR).